The primary structure comprises 475 residues: Cysteine--tRNA ligase (475 aa).

Cys28 contributes to the Zn(2+) binding site. The short motif at 30–40 (PTVYDETHIGH) is the 'HIGH' region element. Cys208, His233, and Glu237 together coordinate Zn(2+). The 'KMSKS' region motif lies at 265–269 (KMSKS). Lys268 serves as a coordination point for ATP.

It belongs to the class-I aminoacyl-tRNA synthetase family. Zn(2+) serves as cofactor.

The protein resides in the cytoplasm. It catalyses the reaction tRNA(Cys) + L-cysteine + ATP = L-cysteinyl-tRNA(Cys) + AMP + diphosphate. This is Cysteine--tRNA ligase from Methanococcus vannielii (strain ATCC 35089 / DSM 1224 / JCM 13029 / OCM 148 / SB).